We begin with the raw amino-acid sequence, 109 residues long: Putative membrane protein insertion efficiency factor (109 aa).

The protein belongs to the UPF0161 family.

The protein resides in the cell inner membrane. Functionally, could be involved in insertion of integral membrane proteins into the membrane. The polypeptide is Putative membrane protein insertion efficiency factor (Rhodopseudomonas palustris (strain BisA53)).